The following is a 108-amino-acid chain: Putative septation protein SpoVG (108 aa).

The disordered stretch occupies residues Phe84–Glu108. Acidic residues predominate over residues Pro94 to Glu108.

Belongs to the SpoVG family.

In terms of biological role, could be involved in septation. This chain is Putative septation protein SpoVG, found in Finegoldia magna (strain ATCC 29328 / DSM 20472 / WAL 2508) (Peptostreptococcus magnus).